The chain runs to 534 residues: Cytochrome P450 monooxygenase AN1598 (534 aa).

Residue Asn3 is glycosylated (N-linked (GlcNAc...) asparagine). Residues 25 to 45 (LYLEILGVLSVVYLLQTLVAY) traverse the membrane as a helical segment. Asn95 is a glycosylation site (N-linked (GlcNAc...) asparagine). Cys464 contributes to the heme binding site. Asn498 carries N-linked (GlcNAc...) asparagine glycosylation.

This sequence belongs to the cytochrome P450 family. Heme is required as a cofactor.

The protein localises to the membrane. It functions in the pathway secondary metabolite biosynthesis; terpenoid biosynthesis. Functionally, bifunctional terpene synthase; part of the gene cluster that mediates the biosynthesis of the diterpene ent-pimara-8(14),15-diene (PD). Within the cluster, the HMG-CoA reductase AN1593 functions in the mevalonate pathway, which produces isoprenoid precursors. The geranylgeranyl pyrophosphate (GGPP) synthase AN1592 is needed in the formation of GGPP, the precursor for diterpenes. Lastly, the pimaradiene synthase pbcA performs the 2 cyclization steps that convert GGPP to ent-pimara-8(14),15-diene. The putative roles of the remaining cluster enzymes in ent-pimara-8(14),15-diene biosynthesis is unclear. The cytochrome P450 monooxygenase AN1598, the glutathione S-transferase AN1595, the oxidoreductases AN1596 and AN1597 probably function as decorative enzymes. It is possible that in biological conditions the compound is oxidized to ent-pimara-8(14),15-dien-19-oic acid, which is a bioactive diterpene compound predominant in many plant extracts. In Emericella nidulans (strain FGSC A4 / ATCC 38163 / CBS 112.46 / NRRL 194 / M139) (Aspergillus nidulans), this protein is Cytochrome P450 monooxygenase AN1598.